Reading from the N-terminus, the 476-residue chain is Glycogen synthase (476 aa).

Residue Lys-15 coordinates ADP-alpha-D-glucose.

This sequence belongs to the glycosyltransferase 1 family. Bacterial/plant glycogen synthase subfamily.

The enzyme catalyses [(1-&gt;4)-alpha-D-glucosyl](n) + ADP-alpha-D-glucose = [(1-&gt;4)-alpha-D-glucosyl](n+1) + ADP + H(+). It functions in the pathway glycan biosynthesis; glycogen biosynthesis. In terms of biological role, synthesizes alpha-1,4-glucan chains using ADP-glucose. In Mycoplasma mobile (strain ATCC 43663 / 163K / NCTC 11711) (Mesomycoplasma mobile), this protein is Glycogen synthase.